We begin with the raw amino-acid sequence, 118 residues long: Large ribosomal subunit protein uL22c (118 aa).

The protein belongs to the universal ribosomal protein uL22 family. In terms of assembly, part of the 50S ribosomal subunit.

It localises to the plastid. Its subcellular location is the chloroplast. Its function is as follows. This protein binds specifically to 23S rRNA. Functionally, the globular domain of the protein is located near the polypeptide exit tunnel on the outside of the subunit, while an extended beta-hairpin is found that lines the wall of the exit tunnel in the center of the 70S ribosome. This is Large ribosomal subunit protein uL22c (rpl22) from Rhodomonas salina (Cryptomonas salina).